The chain runs to 134 residues: Photosystem II assembly factor lipoprotein Psb27 (134 aa).

An N-terminal signal peptide occupies residues 1-21 (MKRFWAMVCALFLSVSLLLTS). A lipid anchor (N-palmitoyl cysteine) is attached at C22. Residue C22 is the site of S-diacylglycerol cysteine attachment.

Belongs to the Psb27 family. In terms of assembly, part of a photosystem II (PSII) assembly intermediate complex PSII-I; crystallized from a strain deleted of psbJ, it forms monomeric PSII before addition of the oxygen evolving complex. PSII-I includes 3 assembly factors not found in mature PSII (Psb27, Psb28 and Psb34). Binds to the lumenal side of PSII, adjacent to the CP43 (psbC) subunit.

The protein resides in the cellular thylakoid membrane. In terms of biological role, plays a role in the repair and/or biogenesis of the calcium-manganese-oxide cluster on the lumenal face of the thylakoid membrane. Its presence in a photosystem II (PSII) preparation prevents binding of other extrinsic subunits PsbO, PsbU and PsbV, and thus assembly of calcium-manganese-oxide cluster. Psb27-containing complexes lack oxygen evolving activity and an oxidizable calcium-manganese-oxide cluster, but have a normal reaction center. The polypeptide is Photosystem II assembly factor lipoprotein Psb27 (Thermosynechococcus vestitus (strain NIES-2133 / IAM M-273 / BP-1)).